The primary structure comprises 435 residues: Palmitoyltransferase pfa4 (435 aa).

The Cytoplasmic segment spans residues 1-10 (MLCSSFSVSR). A helical transmembrane segment spans residues 11–31 (LAIPAVCILIAFLAYTSQIFF). Topologically, residues 32-48 (LYFEDAPLKEDEVWRIN) are lumenal. Residues 49–69 (ILAICIWICYYRACTVDPGHV) form a helical membrane-spanning segment. Over 70 to 129 (PKGWMPSDRERLKADRASGRQRWCRRCEAYKPPRAHHCKTCERCVPKMDHHCPWTSNCVS) the chain is Cytoplasmic. Residues 91-141 (RWCRRCEAYKPPRAHHCKTCERCVPKMDHHCPWTSNCVSHFTFPHFARFLF) enclose the DHHC domain. The S-palmitoyl cysteine intermediate role is filled by Cys121. Residues 130–150 (HFTFPHFARFLFYAVVGIAYL) form a helical membrane-spanning segment. Over 151-179 (ETRLWQRVSKVWGSRHLPSYLGPSMGQIG) the chain is Lumenal. A helical membrane pass occupies residues 180–200 (HLFVLFVTNSLTLFALSLLLL). Residues 201 to 435 (RTLWSLGSNT…QRAKRQHLSQ (235 aa)) lie on the Cytoplasmic side of the membrane. Residues 359-368 (RKPFHVRLEE) are compositionally biased toward basic and acidic residues. A disordered region spans residues 359-408 (RKPFHVRLEEYSNGSSDAEADTGSDDDSDHGEEGWKNSEGERLRDFGVDE). Acidic residues predominate over residues 376–388 (AEADTGSDDDSDH). Residues 389–405 (GEEGWKNSEGERLRDFG) show a composition bias toward basic and acidic residues.

It belongs to the DHHC palmitoyltransferase family. PFA4 subfamily.

Its subcellular location is the endoplasmic reticulum membrane. The catalysed reaction is L-cysteinyl-[protein] + hexadecanoyl-CoA = S-hexadecanoyl-L-cysteinyl-[protein] + CoA. Functionally, mediates the reversible addition of palmitate to target proteins, thereby regulating their membrane association and biological function. The polypeptide is Palmitoyltransferase pfa4 (Emericella nidulans (strain FGSC A4 / ATCC 38163 / CBS 112.46 / NRRL 194 / M139) (Aspergillus nidulans)).